We begin with the raw amino-acid sequence, 388 residues long: LL-diaminopimelate aminotransferase (388 aa).

Substrate is bound by residues Y13, G38, K102, Y126, and N176. Pyridoxal 5'-phosphate contacts are provided by residues 101 to 102 (SK), Y126, N176, Y207, and 235 to 237 (SLS). At K238 the chain carries N6-(pyridoxal phosphate)lysine. Pyridoxal 5'-phosphate is bound at residue R246. R364 is a binding site for substrate.

The protein belongs to the class-I pyridoxal-phosphate-dependent aminotransferase family. LL-diaminopimelate aminotransferase subfamily. As to quaternary structure, homodimer. Requires pyridoxal 5'-phosphate as cofactor.

It catalyses the reaction (2S,6S)-2,6-diaminopimelate + 2-oxoglutarate = (S)-2,3,4,5-tetrahydrodipicolinate + L-glutamate + H2O + H(+). It functions in the pathway amino-acid biosynthesis; L-lysine biosynthesis via DAP pathway; LL-2,6-diaminopimelate from (S)-tetrahydrodipicolinate (aminotransferase route): step 1/1. Involved in the synthesis of meso-diaminopimelate (m-DAP or DL-DAP), required for both lysine and peptidoglycan biosynthesis. Catalyzes the direct conversion of tetrahydrodipicolinate to LL-diaminopimelate. This chain is LL-diaminopimelate aminotransferase, found in Dehalococcoides mccartyi (strain ATCC BAA-2266 / KCTC 15142 / 195) (Dehalococcoides ethenogenes (strain 195)).